A 135-amino-acid chain; its full sequence is DNA-directed RNA polymerase subunit omega (135 aa).

The protein belongs to the RNA polymerase subunit omega family. The RNAP catalytic core consists of 2 alpha, 1 beta, 1 beta' and 1 omega subunit. When a sigma factor is associated with the core the holoenzyme is formed, which can initiate transcription.

It carries out the reaction RNA(n) + a ribonucleoside 5'-triphosphate = RNA(n+1) + diphosphate. Functionally, promotes RNA polymerase assembly. Latches the N- and C-terminal regions of the beta' subunit thereby facilitating its interaction with the beta and alpha subunits. The chain is DNA-directed RNA polymerase subunit omega from Sinorhizobium medicae (strain WSM419) (Ensifer medicae).